A 240-amino-acid polypeptide reads, in one-letter code: uncharacterized protein (240 aa).

2 disordered regions span residues 99–121 and 136–167; these read EPPT…SPEL and ATVS…KRVH. Positions 137 to 155 are enriched in polar residues; that stretch reads TVSSPTSPRPITTESSRVS.

This is an uncharacterized protein from Ictaluridae (bullhead catfishes).